A 367-amino-acid polypeptide reads, in one-letter code: Peroxidase 1 (367 aa).

The first 33 residues, 1–33 (MAKESKLTAGVAAALTVVAACALCLLLPATARA), serve as a signal peptide directing secretion. Q34 is modified (pyrrolidone carboxylic acid). Disulfide bonds link C44/C125, C77/C82, C131/C335, and C209/C244. H75 acts as the Proton acceptor in catalysis. D76, V79, G81, D83, and S85 together coordinate Ca(2+). An N-linked (GlcNAc...) asparagine glycan is attached at N164. P172 is a binding site for substrate. Position 202 (H202) interacts with heme b. Residue T203 coordinates Ca(2+). N218 and N247 each carry an N-linked (GlcNAc...) asparagine glycan. Ca(2+) is bound by residues D259, T262, and D267. A glycan (N-linked (GlcNAc...) asparagine) is linked at N303.

It belongs to the peroxidase family. Classical plant (class III) peroxidase subfamily. The cofactor is heme b. It depends on Ca(2+) as a cofactor. In terms of tissue distribution, expressed in the root tip meristems.

It is found in the secreted. Its subcellular location is the vacuole. It catalyses the reaction 2 a phenolic donor + H2O2 = 2 a phenolic radical donor + 2 H2O. Removal of H(2)O(2), oxidation of toxic reductants, biosynthesis and degradation of lignin, suberization, auxin catabolism, response to environmental stresses such as wounding, pathogen attack and oxidative stress. These functions might be dependent on each isozyme/isoform in each plant tissue. This is Peroxidase 1 (PER1) from Zea mays (Maize).